The chain runs to 576 residues: Phosphoenolpyruvate-protein phosphotransferase (576 aa).

The Tele-phosphohistidine intermediate role is filled by histidine 189. Phosphoenolpyruvate-binding residues include arginine 296 and arginine 332. Glutamate 431 and aspartate 455 together coordinate Mg(2+). Phosphoenolpyruvate-binding positions include 454 to 455 (ND) and arginine 465. Residue cysteine 502 is the Proton donor of the active site.

It belongs to the PEP-utilizing enzyme family. As to quaternary structure, homodimer. Mg(2+) serves as cofactor.

Its subcellular location is the cytoplasm. It carries out the reaction L-histidyl-[protein] + phosphoenolpyruvate = N(pros)-phospho-L-histidyl-[protein] + pyruvate. Its function is as follows. General (non sugar-specific) component of the phosphoenolpyruvate-dependent sugar phosphotransferase system (sugar PTS). This major carbohydrate active-transport system catalyzes the phosphorylation of incoming sugar substrates concomitantly with their translocation across the cell membrane. Enzyme I transfers the phosphoryl group from phosphoenolpyruvate (PEP) to the phosphoryl carrier protein (HPr). The sequence is that of Phosphoenolpyruvate-protein phosphotransferase (ptsI) from Buchnera aphidicola subsp. Baizongia pistaciae (strain Bp).